The chain runs to 88 residues: MAASRLPPATLTLKQFVRRQQVLLLYRRILQTIRQVPNDSDRKYLKDWAREEFKRNKSATEEDTIRMMITQGNMQLKELEKTLALAKS.

A mitochondrion-targeting transit peptide spans M1–R19.

This sequence belongs to the complex I LYR family.

The protein resides in the mitochondrion. Functionally, involved in efficient integration of the N-module into mitochondrial respiratory chain complex I. This is LYR motif-containing protein 2 (LYRM2) from Pongo abelii (Sumatran orangutan).